Consider the following 419-residue polypeptide: Probable pectate lyase C (419 aa).

Positions 1–19 are cleaved as a signal peptide; that stretch reads MRLTPSLISCLSLLHFTSA. N-linked (GlcNAc...) asparagine glycosylation is found at N48, N164, and N201. Residue R204 is part of the active site. Residues 261–296 form the EF-hand domain; the sequence is NENFHAYVETNYYDSDKDGTLNGSELGVDSTNYGGM. D274, D276, D278, and T280 together coordinate Ca(2+). An N-linked (GlcNAc...) asparagine glycan is attached at N282. Residue E285 participates in Ca(2+) binding. Positions 352–395 are disordered; that stretch reads ISDEADMGGAGDLDQGTTPTDTDGDGIPDDAEAELGTDPNTADS. The segment covering 363-372 has biased composition (low complexity); it reads DLDQGTTPTD. The span at 373–386 shows a compositional bias: acidic residues; that stretch reads TDGDGIPDDAEAEL.

The protein belongs to the polysaccharide lyase 1 family. Requires Ca(2+) as cofactor.

The protein localises to the secreted. It catalyses the reaction Eliminative cleavage of (1-&gt;4)-alpha-D-galacturonan to give oligosaccharides with 4-deoxy-alpha-D-galact-4-enuronosyl groups at their non-reducing ends.. Pectinolytic enzyme consist of four classes of enzymes: pectin lyase, polygalacturonase, pectin methylesterase and rhamnogalacturonase. Among pectinolytic enzymes, pectin lyase is the most important in depolymerization of pectin, since it cleaves internal glycosidic bonds of highly methylated pectins. Favors pectate, the anion, over pectin, the methyl ester. The chain is Probable pectate lyase C (plyC) from Aspergillus oryzae (strain ATCC 42149 / RIB 40) (Yellow koji mold).